The following is a 1138-amino-acid chain: uncharacterized protein (1138 aa).

The N-terminal stretch at 1 to 28 is a signal peptide; that stretch reads MKLFPRSILIILVLSFALNLGLVTKTHA. Transmembrane regions (helical) follow at residues 331–351, 359–379, 392–412, 494–514, 520–540, 554–574, and 699–719; these read IVTAFLTLYVMFFGFKLLLAG, YINFILKMIFVTYFSIGINIT, MIQWAFPFLLDGINGLASWVM, MLVSLALSYPLLVISVAAFMV, CMISIVILGILAPLFVPMFLF, MISFLLQPMVVVTFMITMFSV, and IKNILLALVTACFTLYLMYNF. Over residues 775-784 the composition is skewed to gly residues; sequence DLKAGQGGGV. 3 disordered regions span residues 775–914, 958–977, and 995–1071; these read DLKA…KGTG, GGGRIRDQQGEETSERRTNA, and ERDN…KQIR. Residues 801-830 are compositionally biased toward low complexity; it reads AASGGTSAPTVTTPTASSSVATSSPKTVSS. The span at 838 to 852 shows a compositional bias: pro residues; that stretch reads TPPPAPSEAVSPPPA. Residues 854 to 869 are compositionally biased toward polar residues; the sequence is IRTSISTPAPQSNIET. 4 stretches are compositionally biased toward basic and acidic residues: residues 875-888, 961-977, 995-1032, and 1058-1071; these read IIRDNNQESKKEID, RIRDQQGEETSERRTNA, ERDNSVTNKFDKLADELNKSEKAKVEENKNIENDRKEN, and LKEHENPTGVKQIR.

This sequence belongs to the TrbL/VirB6 family.

It localises to the cell membrane. This is an uncharacterized protein from Rickettsia felis (strain ATCC VR-1525 / URRWXCal2) (Rickettsia azadi).